The sequence spans 1832 residues: Zinc finger SWIM domain-containing protein 8 (1832 aa).

Phosphoserine occurs at positions 36, 48, and 53. Residues 45 to 67 (RKQSAGPNSPTGGGGGGGSGGTR) are disordered. The span at 55–65 (TGGGGGGGSGG) shows a compositional bias: gly residues. An SWIM-type zinc finger spans residues 172–208 (YNVAVMFDRCRVTSCSCTCGAGAKWCTHVVALCLFRI). S437 and S564 each carry phosphoserine. Disordered stretches follow at residues 516-722 (PGAS…VGEE), 800-821 (NPPD…VSTS), and 1018-1216 (SQTH…TVDV). Basic and acidic residues predominate over residues 563–572 (LSAEGGDKAL). The span at 1021 to 1042 (HKPQTLSSFYSSSRPATANQRS) shows a compositional bias: polar residues. Gly residues predominate over residues 1121–1132 (SRGGYNGRGWGS). A Phosphothreonine modification is found at T1141. Over residues 1146–1161 (IDSSAPETTSDSSPTL) the composition is skewed to polar residues. Phosphoserine occurs at positions 1155, 1158, and 1162. Residues 1176-1211 (GRGQDSDSISSSSSDSLGSSSSSGSRRASASGGARA) show a composition bias toward low complexity. S1270 is modified (phosphoserine). Residues 1435–1446 (STAREGATSCSG) show a composition bias toward polar residues. Residues 1435–1465 (STAREGATSCSGSGMRAAGEAGRGLPEGRGA) are disordered. Positions 1455–1465 (AGRGLPEGRGA) are enriched in gly residues. The residue at position 1831 (S1831) is a Phosphoserine.

It belongs to the ZSWIM8 family. In terms of assembly, component of the SCF-like E3 ubiquitin-protein ligase complex which contains CUL3, RBX1, ELOB, ELOC and ZSWIM8. Interacts with DAB1.

Its subcellular location is the cytoplasm. It is found in the cytosol. The protein operates within protein modification; protein ubiquitination. Substrate recognition component of a SCF-like E3 ubiquitin-protein ligase complex that promotes target-directed microRNA degradation (TDMD), a process that mediates degradation of microRNAs (miRNAs). The SCF-like E3 ubiquitin-protein ligase complex acts by catalyzing ubiquitination and subsequent degradation of AGO proteins (AGO1, AGO2, AGO3 and/or AGO4), thereby exposing miRNAs for degradation. Specifically recognizes and binds AGO proteins when they are engaged with a TDMD target. May also acts as a regulator of axon guidance: specifically recognizes misfolded ROBO3 and promotes its ubiquitination and subsequent degradation. Plays an essential role for proper embryonic development of heart and lung. Controls protein quality of DAB1, a key signal molecule for brain development, thus protecting its signaling strength. Mechanistically, recognizes intrinsically disordered regions of DAB1 and eliminates misfolded DAB1 that cannot be properly phosphorylated. The polypeptide is Zinc finger SWIM domain-containing protein 8 (Mus musculus (Mouse)).